Consider the following 360-residue polypeptide: Phenylalanine--tRNA ligase alpha subunit (360 aa).

Glu255 contacts Mg(2+).

This sequence belongs to the class-II aminoacyl-tRNA synthetase family. Phe-tRNA synthetase alpha subunit type 1 subfamily. Tetramer of two alpha and two beta subunits. Requires Mg(2+) as cofactor.

The protein resides in the cytoplasm. It carries out the reaction tRNA(Phe) + L-phenylalanine + ATP = L-phenylalanyl-tRNA(Phe) + AMP + diphosphate + H(+). The sequence is that of Phenylalanine--tRNA ligase alpha subunit from Rhizorhabdus wittichii (strain DSM 6014 / CCUG 31198 / JCM 15750 / NBRC 105917 / EY 4224 / RW1) (Sphingomonas wittichii).